Reading from the N-terminus, the 152-residue chain is Ribosome maturation factor RimP (152 aa).

This sequence belongs to the RimP family.

The protein localises to the cytoplasm. Required for maturation of 30S ribosomal subunits. This Burkholderia orbicola (strain MC0-3) protein is Ribosome maturation factor RimP.